A 182-amino-acid chain; its full sequence is NAD(P)H-quinone oxidoreductase subunit J (182 aa).

Belongs to the complex I 30 kDa subunit family. As to quaternary structure, NDH-1 can be composed of about 15 different subunits; different subcomplexes with different compositions have been identified which probably have different functions.

The protein localises to the cellular thylakoid membrane. It catalyses the reaction a plastoquinone + NADH + (n+1) H(+)(in) = a plastoquinol + NAD(+) + n H(+)(out). The enzyme catalyses a plastoquinone + NADPH + (n+1) H(+)(in) = a plastoquinol + NADP(+) + n H(+)(out). Functionally, NDH-1 shuttles electrons from an unknown electron donor, via FMN and iron-sulfur (Fe-S) centers, to quinones in the respiratory and/or the photosynthetic chain. The immediate electron acceptor for the enzyme in this species is believed to be plastoquinone. Couples the redox reaction to proton translocation, and thus conserves the redox energy in a proton gradient. Cyanobacterial NDH-1 also plays a role in inorganic carbon-concentration. This chain is NAD(P)H-quinone oxidoreductase subunit J, found in Synechococcus sp. (strain WH7803).